A 77-amino-acid polypeptide reads, in one-letter code: Large ribosomal subunit protein bL28 (77 aa).

Residues M1–H20 form a disordered region.

It belongs to the bacterial ribosomal protein bL28 family.

This Pseudomonas fluorescens (strain Pf0-1) protein is Large ribosomal subunit protein bL28.